A 716-amino-acid chain; its full sequence is ATP-dependent DNA helicase DinG (716 aa).

Residues 17–294 (ALQEQIPDFI…TCMEQFRPKT (278 aa)) form the Helicase ATP-binding domain. 54-61 (APTGVGKT) provides a ligand contact to ATP. Residue Cys120 participates in [4Fe-4S] cluster binding. The DEAH box motif lies at 131 to 134 (EPTQ). Residues Cys194, Cys199, and Cys205 each coordinate [4Fe-4S] cluster. Residues 248–251 (DEGH) carry the DEAH box motif. Residues 517-698 (HIAEMAAFFR…VFPIEQPEVP (182 aa)) form the Helicase C-terminal domain.

Belongs to the helicase family. DinG subfamily. Type 1 sub-subfamily. The cofactor is [4Fe-4S] cluster.

The catalysed reaction is Couples ATP hydrolysis with the unwinding of duplex DNA at the replication fork by translocating in the 5'-3' direction. This creates two antiparallel DNA single strands (ssDNA). The leading ssDNA polymer is the template for DNA polymerase III holoenzyme which synthesizes a continuous strand.. It catalyses the reaction ATP + H2O = ADP + phosphate + H(+). DNA-dependent ATPase and 5'-3' DNA helicase. Unwinds D-loops, R-loops, forked DNA and G-quadruplex DNA. The protein is ATP-dependent DNA helicase DinG of Escherichia coli O6:H1 (strain CFT073 / ATCC 700928 / UPEC).